The sequence spans 387 residues: Leucine aminopeptidase 1 (387 aa).

A signal peptide spans Met-1 to Ala-18. Positions Ala-19–Val-87 are excised as a propeptide. A glycan (N-linked (GlcNAc...) asparagine) is linked at Asn-179. The Zn(2+) site is built by His-187, Asp-206, Glu-245, and Asp-272. Cysteines 321 and 325 form a disulfide. Residue His-354 coordinates Zn(2+).

This sequence belongs to the peptidase M28 family. M28E subfamily. Monomer. It depends on Zn(2+) as a cofactor.

The protein resides in the secreted. Extracellular aminopeptidase that allows assimilation of proteinaceous substrates. This chain is Leucine aminopeptidase 1 (lap1), found in Aspergillus oryzae (strain ATCC 42149 / RIB 40) (Yellow koji mold).